Here is a 361-residue protein sequence, read N- to C-terminus: Cytochrome c peroxidase, mitochondrial (361 aa).

The N-terminal 41 residues, 1-41 (MASAARSASRAFLRSSLRPAVRSSRFALPTQGLRVASRRGY), are a transit peptide targeting the mitochondrion. The active-site Proton acceptor is H122. Residue H245 participates in heme b binding. Residue W261 is the Tryptophan radical intermediate of the active site.

The protein belongs to the peroxidase family. Cytochrome c peroxidase subfamily. Forms a one-to-one complex with cytochrome c. Requires heme b as cofactor.

It localises to the mitochondrion matrix. Its subcellular location is the mitochondrion intermembrane space. It catalyses the reaction 2 Fe(II)-[cytochrome c] + H2O2 + 2 H(+) = 2 Fe(III)-[cytochrome c] + 2 H2O. Destroys radicals which are normally produced within the cells and which are toxic to biological systems. The protein is Cytochrome c peroxidase, mitochondrial (ccp1) of Emericella nidulans (strain FGSC A4 / ATCC 38163 / CBS 112.46 / NRRL 194 / M139) (Aspergillus nidulans).